The primary structure comprises 637 residues: Protein kinase domain-containing protein ppk3 (637 aa).

Residues 1–296 (MDFIKSAASF…QLLSSKLEVI (296 aa)) form the Protein kinase domain. The stretch at 414–450 (KTLNNELLRSLAVVQNDQHPTLRTNSTICLGKIAEYL) is one HEAT repeat. Positions 576-586 (NDTTEIKEKKN) are enriched in basic and acidic residues. The segment at 576 to 637 (NDTTEIKEKK…ENNVEESWGL (62 aa)) is disordered. The span at 608 to 631 (ETEEQIDESWMENWNDEEETENNV) shows a compositional bias: acidic residues.

Its subcellular location is the golgi apparatus. The chain is Protein kinase domain-containing protein ppk3 (ppk3) from Schizosaccharomyces pombe (strain 972 / ATCC 24843) (Fission yeast).